The following is a 201-amino-acid chain: Probable GTP-binding protein EngB (201 aa).

Residues 22–197 (TFPEYAFIGR…LNYIESINKE (176 aa)) enclose the EngB-type G domain. GTP is bound by residues 30–37 (GRSNVGKS), 57–61 (GKTML), 75–78 (DLPG), 142–145 (TKAD), and 175–178 (ITSS). Mg(2+) is bound by residues Ser-37 and Thr-59.

It belongs to the TRAFAC class TrmE-Era-EngA-EngB-Septin-like GTPase superfamily. EngB GTPase family. Mg(2+) serves as cofactor.

Functionally, necessary for normal cell division and for the maintenance of normal septation. This chain is Probable GTP-binding protein EngB, found in Bacteroides fragilis (strain YCH46).